A 140-amino-acid chain; its full sequence is Putative nickel-responsive regulator 2 (140 aa).

Residues His77, His88, His90, and Cys96 each contribute to the Ni(2+) site.

This sequence belongs to the transcriptional regulatory CopG/NikR family. Ni(2+) serves as cofactor.

Functionally, transcriptional regulator. This chain is Putative nickel-responsive regulator 2, found in Methanothermobacter thermautotrophicus (strain ATCC 29096 / DSM 1053 / JCM 10044 / NBRC 100330 / Delta H) (Methanobacterium thermoautotrophicum).